The sequence spans 364 residues: tRNA 2-selenouridine synthase (364 aa).

The Rhodanese domain maps to 14 to 137 (LIADTPIIDV…LRQTTIQATI (124 aa)). Cysteine 97 (S-selanylcysteine intermediate) is an active-site residue.

It belongs to the SelU family. Monomer.

The catalysed reaction is 5-methylaminomethyl-2-thiouridine(34) in tRNA + selenophosphate + (2E)-geranyl diphosphate + H2O + H(+) = 5-methylaminomethyl-2-selenouridine(34) in tRNA + (2E)-thiogeraniol + phosphate + diphosphate. The enzyme catalyses 5-methylaminomethyl-2-thiouridine(34) in tRNA + (2E)-geranyl diphosphate = 5-methylaminomethyl-S-(2E)-geranyl-thiouridine(34) in tRNA + diphosphate. It catalyses the reaction 5-methylaminomethyl-S-(2E)-geranyl-thiouridine(34) in tRNA + selenophosphate + H(+) = 5-methylaminomethyl-2-(Se-phospho)selenouridine(34) in tRNA + (2E)-thiogeraniol. It carries out the reaction 5-methylaminomethyl-2-(Se-phospho)selenouridine(34) in tRNA + H2O = 5-methylaminomethyl-2-selenouridine(34) in tRNA + phosphate. Its function is as follows. Involved in the post-transcriptional modification of the uridine at the wobble position (U34) of tRNA(Lys), tRNA(Glu) and tRNA(Gln). Catalyzes the conversion of 2-thiouridine (S2U-RNA) to 2-selenouridine (Se2U-RNA). Acts in a two-step process involving geranylation of 2-thiouridine (S2U) to S-geranyl-2-thiouridine (geS2U) and subsequent selenation of the latter derivative to 2-selenouridine (Se2U) in the tRNA chain. The chain is tRNA 2-selenouridine synthase from Escherichia coli (strain 55989 / EAEC).